The sequence spans 423 residues: Putative competence-damage inducible protein (423 aa).

It belongs to the CinA family.

This chain is Putative competence-damage inducible protein, found in Streptococcus pyogenes serotype M2 (strain MGAS10270).